A 319-amino-acid chain; its full sequence is Phospho-N-acetylmuramoyl-pentapeptide-transferase (319 aa).

10 helical membrane-spanning segments follow: residues 5 to 25 (LIPF…FIGF), 51 to 71 (TMGG…VLIW), 79 to 99 (AWIL…DDGI), 116 to 136 (LGQI…HFAF), 149 to 169 (SFLF…AVNL), 172 to 192 (GLDG…AWIA), 197 to 217 (NWVI…FFIF), 224 to 244 (IFMG…VSIF), 252 to 272 (LLIG…VISF), and 299 to 319 (VDIV…IIWG).

It belongs to the glycosyltransferase 4 family. MraY subfamily. It depends on Mg(2+) as a cofactor.

It is found in the cell membrane. It carries out the reaction UDP-N-acetyl-alpha-D-muramoyl-L-alanyl-gamma-D-glutamyl-L-lysyl-D-alanyl-D-alanine + di-trans,octa-cis-undecaprenyl phosphate = Mur2Ac(oyl-L-Ala-gamma-D-Glu-L-Lys-D-Ala-D-Ala)-di-trans,octa-cis-undecaprenyl diphosphate + UMP. It functions in the pathway cell wall biogenesis; peptidoglycan biosynthesis. Catalyzes the initial step of the lipid cycle reactions in the biosynthesis of the cell wall peptidoglycan: transfers peptidoglycan precursor phospho-MurNAc-pentapeptide from UDP-MurNAc-pentapeptide onto the lipid carrier undecaprenyl phosphate, yielding undecaprenyl-pyrophosphoryl-MurNAc-pentapeptide, known as lipid I. The chain is Phospho-N-acetylmuramoyl-pentapeptide-transferase from Lactobacillus johnsonii (strain CNCM I-12250 / La1 / NCC 533).